A 250-amino-acid polypeptide reads, in one-letter code: Putative apoptosis inhibitor ORF99 (250 aa).

The stretch at 13–78 (RVNSFGGWSK…KFSGDCLYLK (66 aa)) is one BIR repeat.

In terms of biological role, may act as an apoptosis inhibitor. This Ostreid herpesvirus 1 (isolate France) (OsHV-1) protein is Putative apoptosis inhibitor ORF99.